Reading from the N-terminus, the 433-residue chain is C2H2 type master regulator of conidiophore development brlA (433 aa).

Disordered regions lie at residues 24–49, 240–269, and 286–306; these read SDCPSMTSSFSPLDSPTPTPTSLYSQ, KSHTPSTPHRSVSMGTPSGSDTPVSRISGH, and MMQRHRQPSRKPSKKQLLRSN. Residues 30–49 are compositionally biased toward low complexity; sequence TSSFSPLDSPTPTPTSLYSQ. A compositionally biased stretch (polar residues) spans 240 to 264; that stretch reads KSHTPSTPHRSVSMGTPSGSDTPVS. The span at 288–302 shows a compositional bias: basic residues; sequence QRHRQPSRKPSKKQL. C2H2-type zinc fingers lie at residues 321-345 and 351-376; these read FKCKEPGCKGRFKRQEHLKRHMKSH and HVCWVPGCHRAFSRSDNLNAHYTKTH. A disordered region spans residues 391–423; that stretch reads ETSQDFDPDFRGQLTPDGRPIYGSKLEDSMPDC.

The protein resides in the nucleus. BrlA, abaA and wetA are pivotal regulators of conidiophore development and conidium maturation. They act individually and together to regulate their own expression and that of numerous other sporulation-specific genes. Binds promoters of target genes at brlA response elements (BREs) containing the conserved sequence 5'-(C/A)(A/G)AGGG(G/A)-3'. Regulates genes involved in conidiogenesis. The protein is C2H2 type master regulator of conidiophore development brlA of Penicillium digitatum (strain PHI26 / CECT 20796) (Green mold).